Consider the following 510-residue polypeptide: Mitogen-activated protein kinase 9 (510 aa).

In terms of domain architecture, Protein kinase spans Tyr-23–Phe-314. ATP-binding positions include Ile-29 to Val-37 and Lys-52. The active-site Proton acceptor is the Asp-149. Thr-185 is modified (phosphothreonine). Residues Thr-185 to Tyr-187 carry the TXY motif. Residue Tyr-187 is modified to Phosphotyrosine. Residue Thr-190 is modified to Phosphothreonine. Positions Asn-393–Thr-461 are disordered. A compositionally biased stretch (basic and acidic residues) spans Leu-410–Asn-431. The span at Ser-433–Thr-461 shows a compositional bias: polar residues.

The protein belongs to the protein kinase superfamily. CMGC Ser/Thr protein kinase family. MAP kinase subfamily. Dually phosphorylated on Thr-185 and Tyr-187, which activates the enzyme.

It carries out the reaction L-seryl-[protein] + ATP = O-phospho-L-seryl-[protein] + ADP + H(+). The catalysed reaction is L-threonyl-[protein] + ATP = O-phospho-L-threonyl-[protein] + ADP + H(+). Its activity is regulated as follows. Activated by threonine and tyrosine phosphorylation. The chain is Mitogen-activated protein kinase 9 (MPK9) from Arabidopsis thaliana (Mouse-ear cress).